The sequence spans 251 residues: 2,3-bisphosphoglycerate-dependent phosphoglycerate mutase (251 aa).

Substrate is bound by residues 8 to 15 (RHGESLWN), 21 to 22 (TG), R60, 87 to 90 (ERHY), K98, 114 to 115 (RR), and 183 to 184 (GN). The active-site Tele-phosphohistidine intermediate is H9. E87 (proton donor/acceptor) is an active-site residue.

It belongs to the phosphoglycerate mutase family. BPG-dependent PGAM subfamily.

It carries out the reaction (2R)-2-phosphoglycerate = (2R)-3-phosphoglycerate. It participates in carbohydrate degradation; glycolysis; pyruvate from D-glyceraldehyde 3-phosphate: step 3/5. Its function is as follows. Catalyzes the interconversion of 2-phosphoglycerate and 3-phosphoglycerate. The protein is 2,3-bisphosphoglycerate-dependent phosphoglycerate mutase of Thermoanaerobacter pseudethanolicus (strain ATCC 33223 / 39E) (Clostridium thermohydrosulfuricum).